A 446-amino-acid chain; its full sequence is Exodeoxyribonuclease 7 large subunit (446 aa).

Belongs to the XseA family. In terms of assembly, heterooligomer composed of large and small subunits.

It is found in the cytoplasm. The enzyme catalyses Exonucleolytic cleavage in either 5'- to 3'- or 3'- to 5'-direction to yield nucleoside 5'-phosphates.. Bidirectionally degrades single-stranded DNA into large acid-insoluble oligonucleotides, which are then degraded further into small acid-soluble oligonucleotides. The chain is Exodeoxyribonuclease 7 large subunit from Xanthomonas campestris pv. campestris (strain B100).